The following is a 603-amino-acid chain: Polypeptide N-acetylgalactosaminyltransferase 10 (603 aa).

Residues 1–11 (MRRKEKRLLQA) lie on the Cytoplasmic side of the membrane. A helical; Signal-anchor for type II membrane protein transmembrane segment spans residues 12–31 (VALVLAALVLLPNVGLWALY). At 32-603 (RERQPDGTPG…STVLEKFNRN (572 aa)) the chain is on the lumenal side. The tract at residues 38–59 (GTPGGSGAAVAPAAGQGSHSRQ) is disordered. The segment covering 45-55 (AAVAPAAGQGS) has biased composition (low complexity). 2 N-linked (GlcNAc...) asparagine glycosylation sites follow: Asn124 and Asn146. 5 disulfide bridges follow: Cys135-Cys365, Cys356-Cys432, Cys471-Cys488, Cys523-Cys538, and Cys563-Cys578. Residues 144–253 (LPNTSIIIPF…VNWLPPLLDR (110 aa)) form a catalytic subdomain A region. Substrate contacts are provided by His154, Glu156, Asp185, and Arg214. Asp237 contacts Mn(2+). Ser238 is a substrate binding site. Residue His239 coordinates Mn(2+). A catalytic subdomain B region spans residues 311 to 373 (PFESPVMAGG…PCSRVGHIYR (63 aa)). Residue Trp342 coordinates substrate. Residue His370 participates in Mn(2+) binding. Positions 373 and 378 each coordinate substrate. Residues 373–384 (RKYVPYKVPAGV) are flexible loop. One can recognise a Ricin B-type lectin domain in the interval 458 to 590 (AAWGEIRNVG…SSLTQQWLFE (133 aa)). A glycan (N-linked (GlcNAc...) asparagine) is linked at Asn593.

Belongs to the glycosyltransferase 2 family. GalNAc-T subfamily. It depends on Mn(2+) as a cofactor. Widely expressed. Expressed at high level in small intestine, and at intermediate levels in stomach, pancreas, ovary, thyroid gland and spleen. Weakly expressed in other tissues.

The protein resides in the golgi apparatus membrane. It catalyses the reaction L-seryl-[protein] + UDP-N-acetyl-alpha-D-galactosamine = a 3-O-[N-acetyl-alpha-D-galactosaminyl]-L-seryl-[protein] + UDP + H(+). It carries out the reaction L-threonyl-[protein] + UDP-N-acetyl-alpha-D-galactosamine = a 3-O-[N-acetyl-alpha-D-galactosaminyl]-L-threonyl-[protein] + UDP + H(+). It functions in the pathway protein modification; protein glycosylation. Catalyzes the initial reaction in O-linked oligosaccharide biosynthesis, the transfer of an N-acetyl-D-galactosamine residue to a serine or threonine residue on the protein receptor. Has activity toward Muc5Ac and EA2 peptide substrates. The chain is Polypeptide N-acetylgalactosaminyltransferase 10 (GALNT10) from Homo sapiens (Human).